The sequence spans 444 residues: MIETSQTIPELVSWAKDREFSLNLPTERLVFLLAIAIYNNERLDGEMLEADLVDIFRHTMNAFEQSTDAIATRANNAINELVKQRLLNRFSSEFTEGLAIYRLTPLGVGVSDYYIRQREFSALRLSVQLSIVADEIQRASDSAEEGVENNENEHYWRRNVFAPLKYSVAEIFDSIDLSQRIMDENQQSIKDEIAELLTKDWQAAISSCERLLDETSGNLRELQDTLNAAGDKLQAQLLRIQDCVIGRDDLYFIDQLITDLQSKLDRIISWGQQAIDLWIGYDRHVHKFIRTAIDMDKNRVFSQRLRNSIHHYFDHPWFLWTAQAERLVDLRDEEMVLREDDALGELPEELQYESLSDLHDQIVEHMQGLLIAYRENNRPIDLSLVLKEQLENYPLSRHFDVARIIVDQAVRLGMANDDLSGIYPDWQAINKRGAEVQAHVIDKY.

Residues 212 to 240 (LDETSGNLRELQDTLNAAGDKLQAQLLRI) form a leucine-zipper region.

The protein belongs to the MukF family. As to quaternary structure, interacts, and probably forms a ternary complex, with MukE and MukB via its C-terminal region. The complex formation is stimulated by calcium or magnesium. It is required for an interaction between MukE and MukB.

It localises to the cytoplasm. Its subcellular location is the nucleoid. In terms of biological role, involved in chromosome condensation, segregation and cell cycle progression. May participate in facilitating chromosome segregation by condensation DNA from both sides of a centrally located replisome during cell division. Not required for mini-F plasmid partitioning. Probably acts via its interaction with MukB and MukE. Overexpression results in anucleate cells. It has a calcium binding activity. This chain is Chromosome partition protein MukF, found in Haemophilus influenzae (strain ATCC 51907 / DSM 11121 / KW20 / Rd).